Consider the following 710-residue polypeptide: F-box only protein 40 (710 aa).

The TRAF-type zinc finger occupies 53-114 (EHTLLCPLEQ…VDSETFLHEN (62 aa)). Disordered regions lie at residues 152–174 (DATEEEPDMNGDTSWEETGGAVG) and 234–279 (GSLG…SQEL). Basic and acidic residues predominate over residues 238-248 (KSEDKNGDVAG). The F-box domain maps to 572 to 626 (LNSLTSLPLEVLQYIAGFLDSISLSQLSQVSVLMRNICATLLQERGMVLSQWKKK).

In terms of assembly, directly interacts with SKP1 and CUL1. Expressed only in heart and skeletal muscle.

The protein localises to the cytoplasm. In terms of biological role, probable substrate-recognition component of the SCF (SKP1-CUL1-F-box protein)-type E3 ubiquitin ligase complex that may function in myogenesis. This chain is F-box only protein 40 (Fbxo40), found in Mus musculus (Mouse).